The sequence spans 521 residues: 2-isopropylmalate synthase (521 aa).

The 263-residue stretch at 12 to 274 (VIIFDTTLRD…WNKIDTTMLT (263 aa)) folds into the Pyruvate carboxyltransferase domain. Mn(2+) contacts are provided by Asp-21, His-209, His-211, and Asn-245. Residues 398 to 521 (KLLSLTVIAG…DLPVPEAAAS (124 aa)) form a regulatory domain region.

It belongs to the alpha-IPM synthase/homocitrate synthase family. LeuA type 1 subfamily. Homodimer. Mn(2+) serves as cofactor.

It is found in the cytoplasm. It carries out the reaction 3-methyl-2-oxobutanoate + acetyl-CoA + H2O = (2S)-2-isopropylmalate + CoA + H(+). It functions in the pathway amino-acid biosynthesis; L-leucine biosynthesis; L-leucine from 3-methyl-2-oxobutanoate: step 1/4. In terms of biological role, catalyzes the condensation of the acetyl group of acetyl-CoA with 3-methyl-2-oxobutanoate (2-ketoisovalerate) to form 3-carboxy-3-hydroxy-4-methylpentanoate (2-isopropylmalate). This chain is 2-isopropylmalate synthase, found in Rhodopseudomonas palustris (strain BisB18).